The primary structure comprises 531 residues: ATP synthase subunit beta (531 aa).

Positions 1 to 48 (MVKAVTSSKETAKVEKKKSAPRSGVKKAVSKSQAGVKDSSSPVHKSSK) are disordered. A compositionally biased stretch (basic residues) spans 19–29 (SAPRSGVKKAV). Over residues 30 to 44 (SKSQAGVKDSSSPVH) the composition is skewed to polar residues. 203 to 210 (GGAGVGKT) lines the ATP pocket.

This sequence belongs to the ATPase alpha/beta chains family. F-type ATPases have 2 components, CF(1) - the catalytic core - and CF(0) - the membrane proton channel. CF(1) has five subunits: alpha(3), beta(3), gamma(1), delta(1), epsilon(1). CF(0) has three main subunits: a(1), b(2) and c(9-12). The alpha and beta chains form an alternating ring which encloses part of the gamma chain. CF(1) is attached to CF(0) by a central stalk formed by the gamma and epsilon chains, while a peripheral stalk is formed by the delta and b chains.

It is found in the cell inner membrane. It carries out the reaction ATP + H2O + 4 H(+)(in) = ADP + phosphate + 5 H(+)(out). Functionally, produces ATP from ADP in the presence of a proton gradient across the membrane. The catalytic sites are hosted primarily by the beta subunits. This is ATP synthase subunit beta from Bartonella henselae (strain ATCC 49882 / DSM 28221 / CCUG 30454 / Houston 1) (Rochalimaea henselae).